A 235-amino-acid polypeptide reads, in one-letter code: Large ribosomal subunit protein uL1 (235 aa).

The protein belongs to the universal ribosomal protein uL1 family. In terms of assembly, part of the 50S ribosomal subunit.

In terms of biological role, binds directly to 23S rRNA. The L1 stalk is quite mobile in the ribosome, and is involved in E site tRNA release. Its function is as follows. Protein L1 is also a translational repressor protein, it controls the translation of the L11 operon by binding to its mRNA. The chain is Large ribosomal subunit protein uL1 from Paenarthrobacter aurescens (strain TC1).